The following is a 371-amino-acid chain: Glutamate 5-kinase (371 aa).

Lys11 serves as a coordination point for ATP. Residues Ser52, Asp139, and Asn151 each contribute to the substrate site. Residues 171–172 and 213–219 contribute to the ATP site; these read TD and TGGMATK. The PUA domain occupies 278–356; it reads EGSLTLDEGA…AEIPRILGYE (79 aa).

Belongs to the glutamate 5-kinase family.

The protein localises to the cytoplasm. The enzyme catalyses L-glutamate + ATP = L-glutamyl 5-phosphate + ADP. Its pathway is amino-acid biosynthesis; L-proline biosynthesis; L-glutamate 5-semialdehyde from L-glutamate: step 1/2. In terms of biological role, catalyzes the transfer of a phosphate group to glutamate to form L-glutamate 5-phosphate. The sequence is that of Glutamate 5-kinase from Synechococcus sp. (strain JA-2-3B'a(2-13)) (Cyanobacteria bacterium Yellowstone B-Prime).